A 217-amino-acid polypeptide reads, in one-letter code: 7-cyano-7-deazaguanine synthase (217 aa).

10-20 (FSGGQDSTTCL) contributes to the ATP binding site. Zn(2+)-binding residues include Cys-185, Cys-194, Cys-197, and Cys-200.

This sequence belongs to the QueC family. In terms of assembly, homodimer. Zn(2+) serves as cofactor.

The catalysed reaction is 7-carboxy-7-deazaguanine + NH4(+) + ATP = 7-cyano-7-deazaguanine + ADP + phosphate + H2O + H(+). It functions in the pathway purine metabolism; 7-cyano-7-deazaguanine biosynthesis. Catalyzes the ATP-dependent conversion of 7-carboxy-7-deazaguanine (CDG) to 7-cyano-7-deazaguanine (preQ(0)). This Streptococcus thermophilus (strain ATCC BAA-491 / LMD-9) protein is 7-cyano-7-deazaguanine synthase.